Here is a 168-residue protein sequence, read N- to C-terminus: Large ribosomal subunit protein uL10 (168 aa).

The protein belongs to the universal ribosomal protein uL10 family. Part of the ribosomal stalk of the 50S ribosomal subunit. The N-terminus interacts with L11 and the large rRNA to form the base of the stalk. The C-terminus forms an elongated spine to which L12 dimers bind in a sequential fashion forming a multimeric L10(L12)X complex.

Its function is as follows. Forms part of the ribosomal stalk, playing a central role in the interaction of the ribosome with GTP-bound translation factors. This is Large ribosomal subunit protein uL10 from Lacticaseibacillus casei (strain BL23) (Lactobacillus casei).